The sequence spans 552 residues: Dihydroxy-acid dehydratase (552 aa).

A Mg(2+)-binding site is contributed by aspartate 78. Cysteine 119 provides a ligand contact to [2Fe-2S] cluster. Mg(2+) contacts are provided by aspartate 120 and lysine 121. Lysine 121 carries the post-translational modification N6-carboxylysine. Residue cysteine 191 participates in [2Fe-2S] cluster binding. Glutamate 442 is a binding site for Mg(2+). Catalysis depends on serine 468, which acts as the Proton acceptor.

It belongs to the IlvD/Edd family. In terms of assembly, homodimer. Requires [2Fe-2S] cluster as cofactor. Mg(2+) is required as a cofactor.

It carries out the reaction (2R)-2,3-dihydroxy-3-methylbutanoate = 3-methyl-2-oxobutanoate + H2O. It catalyses the reaction (2R,3R)-2,3-dihydroxy-3-methylpentanoate = (S)-3-methyl-2-oxopentanoate + H2O. It functions in the pathway amino-acid biosynthesis; L-isoleucine biosynthesis; L-isoleucine from 2-oxobutanoate: step 3/4. It participates in amino-acid biosynthesis; L-valine biosynthesis; L-valine from pyruvate: step 3/4. Functionally, functions in the biosynthesis of branched-chain amino acids. Catalyzes the dehydration of (2R,3R)-2,3-dihydroxy-3-methylpentanoate (2,3-dihydroxy-3-methylvalerate) into 2-oxo-3-methylpentanoate (2-oxo-3-methylvalerate) and of (2R)-2,3-dihydroxy-3-methylbutanoate (2,3-dihydroxyisovalerate) into 2-oxo-3-methylbutanoate (2-oxoisovalerate), the penultimate precursor to L-isoleucine and L-valine, respectively. The chain is Dihydroxy-acid dehydratase from Caldicellulosiruptor saccharolyticus (strain ATCC 43494 / DSM 8903 / Tp8T 6331).